Here is a 225-residue protein sequence, read N- to C-terminus: Probable glutathione S-transferase (225 aa).

One can recognise a GST N-terminal domain in the interval 6 to 85 (EDVKLLGIVG…YIDETWKNNP (80 aa)). Glutathione-binding positions include serine 16, lysine 43, valine 57, and 69-70 (ES). The region spanning 90–214 (DPYQRALARF…PPRDPLFAYF (125 aa)) is the GST C-terminal domain.

The protein belongs to the GST superfamily. HSP26 family.

The catalysed reaction is RX + glutathione = an S-substituted glutathione + a halide anion + H(+). In terms of biological role, may play a role in the cellular response to stress. This is Probable glutathione S-transferase (HSP26-A) from Glycine max (Soybean).